A 75-amino-acid polypeptide reads, in one-letter code: Defensin-like protein 58 (75 aa).

Positions 1–23 (MNITKRYVVIFFLVMLTKSLSNS) are cleaved as a signal peptide. Disulfide bonds link Cys-39/Cys-73, Cys-43/Cys-66, Cys-52/Cys-71, and Cys-56/Cys-72.

This sequence belongs to the DEFL family.

Its subcellular location is the secreted. The polypeptide is Defensin-like protein 58 (Arabidopsis thaliana (Mouse-ear cress)).